A 617-amino-acid chain; its full sequence is Proline--tRNA ligase (617 aa).

It belongs to the class-II aminoacyl-tRNA synthetase family. ProS type 1 subfamily. Homodimer.

The protein resides in the cytoplasm. The catalysed reaction is tRNA(Pro) + L-proline + ATP = L-prolyl-tRNA(Pro) + AMP + diphosphate. Functionally, catalyzes the attachment of proline to tRNA(Pro) in a two-step reaction: proline is first activated by ATP to form Pro-AMP and then transferred to the acceptor end of tRNA(Pro). As ProRS can inadvertently accommodate and process non-cognate amino acids such as alanine and cysteine, to avoid such errors it has two additional distinct editing activities against alanine. One activity is designated as 'pretransfer' editing and involves the tRNA(Pro)-independent hydrolysis of activated Ala-AMP. The other activity is designated 'posttransfer' editing and involves deacylation of mischarged Ala-tRNA(Pro). The misacylated Cys-tRNA(Pro) is not edited by ProRS. The polypeptide is Proline--tRNA ligase (Streptococcus pneumoniae (strain 70585)).